The sequence spans 303 residues: MLWFKNLMVYRLSREVSLQAEEMEKQLAAYTFTPCGSQDMAKTGWVAPMGSQSDALTHTTNGQIILCARKEEKILPSPVVKQALEAKIFKLEAEQGRKLKKTEKDSLKDEVLHSLLPRAFSRFNQTMMWIDTVNDLIMVDCASAKKAEDTLALLRKSLGSLPVVPLTMENPIELTLTEWVRSGSPAQGFQLLDEAELKAILEDGGVIRAKKQDLVCDEIAVHIEAGKLVTKLALDWQQRIQFVMCDDGSIKRLKFCDELRDQNEDIEREDVSGRFDADFILMTGELAALIKNLVEGLGGEAQR.

The protein belongs to the RdgC family.

It is found in the cytoplasm. Its subcellular location is the nucleoid. Its function is as follows. May be involved in recombination. This Enterobacter sp. (strain 638) protein is Recombination-associated protein RdgC.